Reading from the N-terminus, the 297-residue chain is Homoserine kinase (297 aa).

An ATP-binding site is contributed by 85–95 (PPTRGMGSSSA).

This sequence belongs to the GHMP kinase family. Homoserine kinase subfamily.

It localises to the cytoplasm. It catalyses the reaction L-homoserine + ATP = O-phospho-L-homoserine + ADP + H(+). The protein operates within amino-acid biosynthesis; L-threonine biosynthesis; L-threonine from L-aspartate: step 4/5. Catalyzes the ATP-dependent phosphorylation of L-homoserine to L-homoserine phosphate. The protein is Homoserine kinase of Desulfitobacterium hafniense (strain DSM 10664 / DCB-2).